The following is a 399-amino-acid chain: Exodeoxyribonuclease 7 large subunit (399 aa).

The protein belongs to the XseA family. As to quaternary structure, heterooligomer composed of large and small subunits.

It localises to the cytoplasm. It catalyses the reaction Exonucleolytic cleavage in either 5'- to 3'- or 3'- to 5'-direction to yield nucleoside 5'-phosphates.. In terms of biological role, bidirectionally degrades single-stranded DNA into large acid-insoluble oligonucleotides, which are then degraded further into small acid-soluble oligonucleotides. The chain is Exodeoxyribonuclease 7 large subunit from Clostridium acetobutylicum (strain ATCC 824 / DSM 792 / JCM 1419 / IAM 19013 / LMG 5710 / NBRC 13948 / NRRL B-527 / VKM B-1787 / 2291 / W).